The primary structure comprises 368 residues: DNA replication and repair protein RecF (368 aa).

An ATP-binding site is contributed by 30-37 (GNNAQGKT).

It belongs to the RecF family.

The protein localises to the cytoplasm. In terms of biological role, the RecF protein is involved in DNA metabolism; it is required for DNA replication and normal SOS inducibility. RecF binds preferentially to single-stranded, linear DNA. It also seems to bind ATP. This Streptococcus pyogenes serotype M6 (strain ATCC BAA-946 / MGAS10394) protein is DNA replication and repair protein RecF.